A 241-amino-acid chain; its full sequence is Phycocyanobilin:ferredoxin oxidoreductase (241 aa).

This sequence belongs to the HY2 family.

The catalysed reaction is (2R,3Z)-phycocyanobilin + 4 oxidized [2Fe-2S]-[ferredoxin] = biliverdin IXalpha + 4 reduced [2Fe-2S]-[ferredoxin] + 4 H(+). Its function is as follows. Catalyzes the four-electron reduction of biliverdin IX-alpha (2-electron reduction at both the A and D rings); the reaction proceeds via an isolatable 2-electron intermediate, 181,182-dihydrobiliverdin. This Prochlorococcus marinus (strain MIT 9312) protein is Phycocyanobilin:ferredoxin oxidoreductase.